A 234-amino-acid chain; its full sequence is uncharacterized protein (234 aa).

An NADP(+)-binding site is contributed by 10-34; sequence VVTGASSGIGASIAETLANQGVKVV. Position 143 (serine 143) interacts with substrate. Tyrosine 156 (proton acceptor) is an active-site residue.

It belongs to the short-chain dehydrogenases/reductases (SDR) family.

This is an uncharacterized protein from Staphylococcus saprophyticus subsp. saprophyticus (strain ATCC 15305 / DSM 20229 / NCIMB 8711 / NCTC 7292 / S-41).